Here is a 691-residue protein sequence, read N- to C-terminus: DNA ligase (691 aa).

NAD(+) is bound by residues 41 to 45 (DAEYD), 90 to 91 (SL), and glutamate 130. The active-site N6-AMP-lysine intermediate is the lysine 132. NAD(+) is bound by residues arginine 153, glutamate 190, lysine 307, and lysine 331. Residues cysteine 425, cysteine 428, cysteine 443, and cysteine 449 each contribute to the Zn(2+) site. The region spanning 610 to 691 (APQGVLAGKT…MHTLLEGHAR (82 aa)) is the BRCT domain.

It belongs to the NAD-dependent DNA ligase family. LigA subfamily. The cofactor is Mg(2+). Mn(2+) is required as a cofactor.

The enzyme catalyses NAD(+) + (deoxyribonucleotide)n-3'-hydroxyl + 5'-phospho-(deoxyribonucleotide)m = (deoxyribonucleotide)n+m + AMP + beta-nicotinamide D-nucleotide.. Functionally, DNA ligase that catalyzes the formation of phosphodiester linkages between 5'-phosphoryl and 3'-hydroxyl groups in double-stranded DNA using NAD as a coenzyme and as the energy source for the reaction. It is essential for DNA replication and repair of damaged DNA. This is DNA ligase from Burkholderia pseudomallei (strain 1106a).